We begin with the raw amino-acid sequence, 250 residues long: MNILLSNDDGIYSPGIQKLSKKLKKFLNVQVIAPSCDKSGSSSSLTINNPLKVHKFSNGDITVYSGTPIDCVYLGINFFMKPKPDFVVSGINLGANLGDDVFYSGTVGAAMEGRYLKYSSLAISLDGNKHLDVAVEIVYKFLKFLLNNPFRKKYILNINIPDSPLKYIKGFKITKCGRKNFKNTVIKSKDSENKNIFWIGPKTNCYNESIGTDFHAIKNNYISVTPLLSNLTNNKEINSISNWFENFYKS.

4 residues coordinate a divalent metal cation: D8, D9, S39, and N92.

It belongs to the SurE nucleotidase family. The cofactor is a divalent metal cation.

It localises to the cytoplasm. It catalyses the reaction a ribonucleoside 5'-phosphate + H2O = a ribonucleoside + phosphate. The enzyme catalyses a ribonucleoside 3'-phosphate + H2O = a ribonucleoside + phosphate. It carries out the reaction [phosphate](n) + H2O = [phosphate](n-1) + phosphate + H(+). Functionally, nucleotidase with a broad substrate specificity as it can dephosphorylate various ribo- and deoxyribonucleoside 5'-monophosphates and ribonucleoside 3'-monophosphates with highest affinity to 3'-AMP. Also hydrolyzes polyphosphate (exopolyphosphatase activity) with the preference for short-chain-length substrates (P20-25). Might be involved in the regulation of dNTP and NTP pools, and in the turnover of 3'-mononucleotides produced by numerous intracellular RNases (T1, T2, and F) during the degradation of various RNAs. This chain is 5'/3'-nucleotidase SurE, found in Wigglesworthia glossinidia brevipalpis.